A 508-amino-acid chain; its full sequence is Ribose import ATP-binding protein RbsA 2 (508 aa).

ABC transporter domains are found at residues 6–241 (LTIH…VGRE) and 254–499 (ERSG…SGMG). Residue 38–45 (GENGAGKS) coordinates ATP.

The protein belongs to the ABC transporter superfamily. Ribose importer (TC 3.A.1.2.1) family. The complex is composed of an ATP-binding protein (RbsA), two transmembrane proteins (RbsC) and a solute-binding protein (RbsB).

It localises to the cell inner membrane. It carries out the reaction D-ribose(out) + ATP + H2O = D-ribose(in) + ADP + phosphate + H(+). Its function is as follows. Part of the ABC transporter complex RbsABC involved in ribose import. Responsible for energy coupling to the transport system. This is Ribose import ATP-binding protein RbsA 2 from Rhizobium etli (strain ATCC 51251 / DSM 11541 / JCM 21823 / NBRC 15573 / CFN 42).